Reading from the N-terminus, the 138-residue chain is Nucleoside diphosphate kinase (138 aa).

ATP is bound by residues Lys-10, Phe-58, Arg-86, Thr-92, Arg-103, and Asn-113. His-116 acts as the Pros-phosphohistidine intermediate in catalysis.

The protein belongs to the NDK family. In terms of assembly, homotetramer. Requires Mg(2+) as cofactor.

Its subcellular location is the cytoplasm. It carries out the reaction a 2'-deoxyribonucleoside 5'-diphosphate + ATP = a 2'-deoxyribonucleoside 5'-triphosphate + ADP. It catalyses the reaction a ribonucleoside 5'-diphosphate + ATP = a ribonucleoside 5'-triphosphate + ADP. Functionally, major role in the synthesis of nucleoside triphosphates other than ATP. The ATP gamma phosphate is transferred to the NDP beta phosphate via a ping-pong mechanism, using a phosphorylated active-site intermediate. In Glaesserella parasuis serovar 5 (strain SH0165) (Haemophilus parasuis), this protein is Nucleoside diphosphate kinase.